A 317-amino-acid polypeptide reads, in one-letter code: Beta-ketoacyl-[acyl-carrier-protein] synthase III (317 aa).

Catalysis depends on residues cysteine 112 and histidine 244. Residues 245–249 (QANLR) form an ACP-binding region. The active site involves asparagine 274.

It belongs to the thiolase-like superfamily. FabH family. Homodimer.

Its subcellular location is the cytoplasm. The enzyme catalyses malonyl-[ACP] + acetyl-CoA + H(+) = 3-oxobutanoyl-[ACP] + CO2 + CoA. Its pathway is lipid metabolism; fatty acid biosynthesis. Catalyzes the condensation reaction of fatty acid synthesis by the addition to an acyl acceptor of two carbons from malonyl-ACP. Catalyzes the first condensation reaction which initiates fatty acid synthesis and may therefore play a role in governing the total rate of fatty acid production. Possesses both acetoacetyl-ACP synthase and acetyl transacylase activities. Its substrate specificity determines the biosynthesis of branched-chain and/or straight-chain of fatty acids. The protein is Beta-ketoacyl-[acyl-carrier-protein] synthase III of Serratia proteamaculans (strain 568).